The following is a 365-amino-acid chain: 5-hydroxytryptamine receptor 1E (365 aa).

Topologically, residues 1–21 are extracellular; it reads MNITNCTTEASMAIRPKTITE. Asn2 and Asn5 each carry an N-linked (GlcNAc...) asparagine glycan. Residues 22-45 traverse the membrane as a helical segment; it reads KMLICMTLVVITTLTTLLNLAVIM. The Cytoplasmic segment spans residues 46–59; it reads AIGTTKKLHQPANY. Residues 60–84 form a helical membrane-spanning segment; sequence LICSLAVTDLLVAVLVMPLSIIYIV. The Extracellular segment spans residues 85 to 92; the sequence is MDRWKLGY. The chain crosses the membrane as a helical span at residues 93–118; the sequence is FLCEVWLSVDMTCCTCSILHLCVIAL. A disulfide bridge connects residues Cys95 and Cys173. 2 residues coordinate serotonin: Asp102 and Cys106. The DRY motif; important for ligand-induced conformation changes signature appears at 119–121; it reads DRY. Topologically, residues 119 to 138 are cytoplasmic; sequence DRYWAITNAIEYARKRTAKR. A helical membrane pass occupies residues 139–157; it reads AALMILTVWTISIFISMPP. Over 158-179 the chain is Extracellular; that stretch reads LFWRSHRRLSPPPSQCTIQHDH. A helical transmembrane segment spans residues 180–203; the sequence is VIYTIYSTLGAFYIPLTLILILYY. Residues 204 to 291 lie on the Cytoplasmic side of the membrane; it reads RIYHAAKSLY…SSTRERKAAR (88 aa). A helical membrane pass occupies residues 292–316; the sequence is ILGLILGAFILSWLPFFIKELIVGL. Over 317–322 the chain is Extracellular; that stretch reads SIYTVS. Residues 323-345 form a helical membrane-spanning segment; the sequence is SEVADFLTWLGYVNSLINPLLYT. The short motif at 340–344 is the NPxxY motif; important for ligand-induced conformation changes and signaling element; the sequence is NPLLY. Residues 346–365 are Cytoplasmic-facing; that stretch reads SFNEDFKLAFKKLIRCREHT.

Belongs to the G-protein coupled receptor 1 family. Detected in brain.

The protein resides in the cell membrane. G-protein coupled receptor for 5-hydroxytryptamine (serotonin). Also functions as a receptor for various alkaloids and psychoactive substances. Ligand binding causes a conformation change that triggers signaling via guanine nucleotide-binding proteins (G proteins) and modulates the activity of downstream effectors, such as adenylate cyclase. HTR1E is coupled to G(i)/G(o) G alpha proteins and mediates inhibitory neurotransmission by inhibiting adenylate cyclase activity. This is 5-hydroxytryptamine receptor 1E from Homo sapiens (Human).